A 178-amino-acid polypeptide reads, in one-letter code: Interleukin-10 (178 aa).

A signal peptide spans 1 to 18; sequence MPGSALLCCLALLAGVKA. Intrachain disulfides connect Cys30-Cys126 and Cys80-Cys132. Asn67 is a glycosylation site (N-linked (GlcNAc...) asparagine). Asn134 carries N-linked (GlcNAc...) asparagine glycosylation.

It belongs to the IL-10 family. Homodimer. Interacts with IL10RA and IL10RB.

Its subcellular location is the secreted. Functionally, major immune regulatory cytokine that acts on many cells of the immune system where it has profound anti-inflammatory functions, limiting excessive tissue disruption caused by inflammation. Mechanistically, IL10 binds to its heterotetrameric receptor comprising IL10RA and IL10RB leading to JAK1 and STAT2-mediated phosphorylation of STAT3. In turn, STAT3 translocates to the nucleus where it drives expression of anti-inflammatory mediators. Targets antigen-presenting cells (APCs) such as macrophages and monocytes and inhibits their release of pro-inflammatory cytokines including granulocyte-macrophage colony-stimulating factor /GM-CSF, granulocyte colony-stimulating factor/G-CSF, IL-1 alpha, IL-1 beta, IL-6, IL-8 and TNF-alpha. Also interferes with antigen presentation by reducing the expression of MHC-class II and co-stimulatory molecules, thereby inhibiting their ability to induce T cell activation. In addition, controls the inflammatory response of macrophages by reprogramming essential metabolic pathways including mTOR signaling. In Cavia porcellus (Guinea pig), this protein is Interleukin-10 (IL10).